The following is a 183-amino-acid chain: Glutathione-regulated potassium-efflux system ancillary protein KefG (183 aa).

Belongs to the NAD(P)H dehydrogenase (quinone) family. KefG subfamily. Interacts with KefB.

It localises to the cell inner membrane. The catalysed reaction is a quinone + NADH + H(+) = a quinol + NAD(+). It catalyses the reaction a quinone + NADPH + H(+) = a quinol + NADP(+). In terms of biological role, regulatory subunit of a potassium efflux system that confers protection against electrophiles. Required for full activity of KefB. The protein is Glutathione-regulated potassium-efflux system ancillary protein KefG of Pectobacterium carotovorum subsp. carotovorum (strain PC1).